We begin with the raw amino-acid sequence, 138 residues long: Small ribosomal subunit protein uS11 (138 aa).

Low complexity predominate over residues 1–12 (MAPKKPGAAGPK). Disordered stretches follow at residues 1–27 (MAPK…NVPH) and 119–138 (ISDV…RRRV). The segment covering 13 to 22 (KAQKTRRREK) has biased composition (basic residues).

The protein belongs to the universal ribosomal protein uS11 family. As to quaternary structure, part of the 30S ribosomal subunit. Interacts with proteins S7 and S18. Binds to IF-3.

In terms of biological role, located on the platform of the 30S subunit, it bridges several disparate RNA helices of the 16S rRNA. Forms part of the Shine-Dalgarno cleft in the 70S ribosome. In Mycobacteroides abscessus (strain ATCC 19977 / DSM 44196 / CCUG 20993 / CIP 104536 / JCM 13569 / NCTC 13031 / TMC 1543 / L948) (Mycobacterium abscessus), this protein is Small ribosomal subunit protein uS11.